We begin with the raw amino-acid sequence, 440 residues long: MAHVTDFKEAGFNTLLEELEWRGLISQSTDRDRLAEALNGEPITYYCGFDPTAASLHIGNLVQLINMRHLQLAGHHPIALVGGATGLIGDPRQSGERTLNPKDVVAGWADRLKNQIGGILDTEGANAVRFVSNYDWTASMTVIDFLRDVGKNFRLGTMLAKDTVARRLNSEEGISFTEFSYQVLQGNDFLHLFDEYHCTLELGGSDQWGNLTSGLDLIHKVRGVDVNVFTSPIITDASGKKFGKSEGNAVWLDATMLSPYKFYQFWINRPDVEMESLLKAFTFLPKAEIERLVEESKTNPGKREAQKTLAWEVTSFVHGEAATQAAIDASGALFGRGGNLEDIDEEMLESVLDGFKVVDENGEHVFPVSKPGDRVIDAAQAAGLFKSASEARRAIKSGGVYLNNNRIEDEEQVLAEADFLAGRFALIRRGKKALGAVENR.

Position 46 (Y46) interacts with L-tyrosine. A 'HIGH' region motif is present at residues P51 to N60. The L-tyrosine site is built by Y181 and Q185. The 'KMSKS' region signature appears at K241 to S245. Residue K244 participates in ATP binding. Residues D373–N439 enclose the S4 RNA-binding domain.

This sequence belongs to the class-I aminoacyl-tRNA synthetase family. TyrS type 1 subfamily. In terms of assembly, homodimer.

Its subcellular location is the cytoplasm. The catalysed reaction is tRNA(Tyr) + L-tyrosine + ATP = L-tyrosyl-tRNA(Tyr) + AMP + diphosphate + H(+). Catalyzes the attachment of tyrosine to tRNA(Tyr) in a two-step reaction: tyrosine is first activated by ATP to form Tyr-AMP and then transferred to the acceptor end of tRNA(Tyr). In Bifidobacterium longum (strain NCC 2705), this protein is Tyrosine--tRNA ligase.